A 225-amino-acid chain; its full sequence is ATP synthase subunit a (225 aa).

Transmembrane regions (helical) follow at residues 16-36 (LFVY…VAKL), 79-99 (LVAT…IPGF), 105-125 (SLNL…FEGI), 176-196 (LFLL…AYAL), and 202-222 (VLQT…AVAI).

This sequence belongs to the ATPase A chain family. As to quaternary structure, F-type ATPases have 2 components, CF(1) - the catalytic core - and CF(0) - the membrane proton channel. CF(1) has five subunits: alpha(3), beta(3), gamma(1), delta(1), epsilon(1). CF(0) has three main subunits: a(1), b(2) and c(9-12). The alpha and beta chains form an alternating ring which encloses part of the gamma chain. CF(1) is attached to CF(0) by a central stalk formed by the gamma and epsilon chains, while a peripheral stalk is formed by the delta and b chains.

The protein localises to the cell inner membrane. Functionally, key component of the proton channel; it plays a direct role in the translocation of protons across the membrane. The sequence is that of ATP synthase subunit a from Campylobacter curvus (strain 525.92).